The sequence spans 317 residues: MENMDLIKRNVQEIVTEEELTKLLETKKHPSAYTGYEPSGKIHMGHVLTVNKLLDLQKAGFEITVLLADVHAYLNQKGTMDEVRKTADYNKKCFLALGLDPEMTNFVYGSDFQLSPEYMLNVLKLTQATSLNRAKRSMDEVGRKMEDPKVSQMVYPIMQAVDIALLGVDVAVGGIDQRKIHMLAREGLPGLGFKAPLCIHTPILLGLDGTKMSSSNENYISVDDDEAALKKKFKKAFCPAEDIENNPVLELFKYHITPRYDEMVFERPEKFGGDLVCKSYAELEKVFADGSLHPMDLKNGAAKYLNEILEPVRSVLE.

Position 33 (Tyr-33) interacts with L-tyrosine. A 'HIGH' region motif is present at residues 38–46 (PSGKIHMGH). L-tyrosine is bound by residues Tyr-155, Gln-159, Asp-162, and Gln-177. The 'KMSKS' region signature appears at 211–215 (KMSSS). ATP is bound at residue Ser-214.

This sequence belongs to the class-I aminoacyl-tRNA synthetase family. TyrS type 3 subfamily. Homodimer.

Its subcellular location is the cytoplasm. The catalysed reaction is tRNA(Tyr) + L-tyrosine + ATP = L-tyrosyl-tRNA(Tyr) + AMP + diphosphate + H(+). Functionally, catalyzes the attachment of tyrosine to tRNA(Tyr) in a two-step reaction: tyrosine is first activated by ATP to form Tyr-AMP and then transferred to the acceptor end of tRNA(Tyr). This is Tyrosine--tRNA ligase from Methanococcoides burtonii (strain DSM 6242 / NBRC 107633 / OCM 468 / ACE-M).